Reading from the N-terminus, the 314-residue chain is Triosephosphate isomerase, chloroplastic (314 aa).

Positions 1-22 are enriched in polar residues; that stretch reads MAVASTSLASQLSGPKSLSQPY. Residues 1 to 25 are disordered; sequence MAVASTSLASQLSGPKSLSQPYSGL. A chloroplast-targeting transit peptide spans 1–59; it reads MAVASTSLASQLSGPKSLSQPYSGLRRSCPKLDQSHSSLFQHLSLSSSSRKASRAVVAM. Residues N70 and K72 each coordinate substrate. H154 serves as the catalytic Electrophile. The active-site Proton acceptor is E224.

The protein belongs to the triosephosphate isomerase family. Homodimer.

The protein localises to the plastid. Its subcellular location is the chloroplast. The enzyme catalyses D-glyceraldehyde 3-phosphate = dihydroxyacetone phosphate. The protein operates within carbohydrate biosynthesis; Calvin cycle. The chain is Triosephosphate isomerase, chloroplastic (TPI) from Fragaria ananassa (Strawberry).